Reading from the N-terminus, the 723-residue chain is MGSRCALALAVLSALLCQVWSSGVFELKLQEFVNKKGLLGNRNCCRGGAGPPPCACRTFFRVCLKHYQASVSPEPPCTYGSAVTPVLGVDSFSLPDGGGADSAFSNPIRFPFGFTWPGTFSLIIEALHTDSPDDLATENPERLISRLATQRHLTVGEEWSQDLHSSGRTDLKYSYRFVCDEHYYGEGCSVFCRPRDDAFGHFTCGERGEKVCNPGWKGPYCTEPICLPGCDEQHGFCDKPGECKCRVGWQGRYCDECIRYPGCLHGTCQQPWQCNCQEGWGGLFCNQDLNYCTHHKPCKNGATCTNTGQGSYTCSCRPGYTGATCELGIDECDPSPCKNGGSCTDLENSYSCTCPPGFYGKICELSAMTCADGPCFNGGRCSDSPDGGYSCRCPVGYSGFNCEKKIDYCSSSPCSNGAKCVDLGDAYLCRCQAGFSGRHCDDNVDDCASSPCANGGTCRDGVNDFSCTCPPGYTGRNCSAPVSRCEHAPCHNGATCHERGHRYVCECARGYGGPNCQFLLPELPPGPAVVDLTEKLEGQGGPFPWVAVCAGVILVLMLLLGCAAVVVCVRLRLQKHRPPADPCRGETETMNNLANCQREKDISVSIIGATQIKNTNKKADFHGDHSADKNGFKARYPAVDYNLVQDLKGDDTAVRDAHSKRDTKCQPQGSSGEEKGTPTTLRGGEASERKRPDSGCSTSKDTKYQSVYVISEEKDECVIATEV.

The signal sequence occupies residues 1-17 (MGSRCALALAVLSALLC). The Extracellular portion of the chain corresponds to 18 to 545 (QVWSSGVFEL…LEGQGGPFPW (528 aa)). The DSL domain occupies 177-221 (FVCDEHYYGEGCSVFCRPRDDAFGHFTCGERGEKVCNPGWKGPYC). 27 cysteine pairs are disulfide-bonded: cysteine 179–cysteine 188, cysteine 192–cysteine 204, cysteine 212–cysteine 221, cysteine 226–cysteine 237, cysteine 230–cysteine 243, cysteine 245–cysteine 254, cysteine 257–cysteine 268, cysteine 263–cysteine 274, cysteine 276–cysteine 285, cysteine 292–cysteine 304, cysteine 298–cysteine 314, cysteine 316–cysteine 325, cysteine 332–cysteine 343, cysteine 337–cysteine 352, cysteine 354–cysteine 363, cysteine 370–cysteine 381, cysteine 375–cysteine 391, cysteine 393–cysteine 402, cysteine 409–cysteine 420, cysteine 414–cysteine 429, cysteine 431–cysteine 440, cysteine 447–cysteine 458, cysteine 452–cysteine 467, cysteine 469–cysteine 478, cysteine 485–cysteine 496, cysteine 490–cysteine 505, and cysteine 507–cysteine 516. EGF-like domains follow at residues 226–254 (CLPGCDEQHGFCDKPGECKCRVGWQGRYC), 257–285 (CIRYPGCLHGTCQQPWQCNCQEGWGGLFC), and 292–325 (CTHHKPCKNGATCTNTGQGSYTCSCRPGYTGATC). The 32-residue stretch at 332-363 (CDPSPCKNGGSCTDLENSYSCTCPPGFYGKIC) folds into the EGF-like 4; calcium-binding domain. 2 consecutive EGF-like domains span residues 370-402 (CADGPCFNGGRCSDSPDGGYSCRCPVGYSGFNC) and 409-440 (CSSSPCSNGAKCVDLGDAYLCRCQAGFSGRHC). Residues 447–478 (CASSPCANGGTCRDGVNDFSCTCPPGYTGRNC) enclose the EGF-like 7; calcium-binding domain. N-linked (GlcNAc...) asparagine glycosylation is present at asparagine 477. The region spanning 485 to 516 (CEHAPCHNGATCHERGHRYVCECARGYGGPNC) is the EGF-like 8 domain. The chain crosses the membrane as a helical span at residues 546 to 568 (VAVCAGVILVLMLLLGCAAVVVC). The Cytoplasmic segment spans residues 569–723 (VRLRLQKHRP…KDECVIATEV (155 aa)). Lysine 613 is covalently cross-linked (Glycyl lysine isopeptide (Lys-Gly) (interchain with G-Cter in ubiquitin)). A compositionally biased stretch (basic and acidic residues) spans 653-664 (AVRDAHSKRDTK). The segment at 653-702 (AVRDAHSKRDTKCQPQGSSGEEKGTPTTLRGGEASERKRPDSGCSTSKDT) is disordered. Serine 694 carries the phosphoserine; by PKB modification. Phosphoserine is present on serine 697. The segment at 720–723 (ATEV) is interaction with MAGI1.

Homodimer. Interacts with TJP1. Interacts with MAGI1 (via PDZ domain); forms a complex with CTNNB1 and CDH2 and promotes recruitment to the adherens junction and stabilization on the cell surface. Interacts with PSEN1; undergoes a presenilin-dependent gamma-secretase cleavage that releases a Dll1-intracellular form. Interacts with MFAP5. Interacts with MIB1. Interacts with NEURL1B; leads to ubiquitination. Interacts with NEURL1. Interacts with SYNJ2BP; enhances DLL1 protein stability, and promotes Notch signaling in endothelial cells. Interacts with MAGI1, MAGI2, MAGI3 and MPDZ. Interacts (via ubiquitin) with EPN1 (via IUM domain); binding with NOTCH1 attached to neighboring cell, promotes ligand ubiquitination and EPN1 interaction, leading to NECD transendocytosis and Notch signaling. Interacts with NOTCH1. Interacts with NOTCH2NLB; leading to promote Notch signaling pathway in a cell-autonomous manner through inhibition of cis DLL1-NOTCH2 interactions. In terms of processing, ubiquitinated by MIB (MIB1 or MIB2), leading to its endocytosis and subsequent degradation. Ubiquitinated; promotes recycling back to the plasma membrane and confers a strong affinity for NOTCH1. Multi-ubiquitination of Lys-613 by MIB1 promotes both cis and trans-interaction with NOTCH1, as well as activation of Notch signaling. Ubiquitinated by NEURL1B. Phosphorylated in a membrane association-dependent manner. Phosphorylation at Ser-697 requires the presence of Ser-694, whereas phosphorylation at Ser-694 occurs independently of the other site. Phosphorylation is required for full ligand activity in vitro and affects surface presentation, ectodomain shedding, and endocytosis. Post-translationally, O-fucosylated. Can be elongated to a disaccharide by MFNG. As to expression, expressed in heart and pancreas, with lower expression in brain and muscle and almost no expression in placenta, lung, liver and kidney.

The protein localises to the apical cell membrane. It is found in the cell junction. It localises to the adherens junction. The protein resides in the membrane raft. Transmembrane ligand protein of NOTCH1, NOTCH2 and NOTCH3 receptors that binds the extracellular domain (ECD) of Notch receptor in a cis and trans fashion manner. Following transinteraction, ligand cells produce mechanical force that depends of a clathrin-mediated endocytosis, requiring ligand ubiquitination, EPN1 interaction, and actin polymerisation; these events promote Notch receptor extracellular domain (NECD) transendocytosis and triggers Notch signaling through induction of cleavage, hyperphosphorylation, and nuclear accumulation of the intracellular domain of Notch receptors (NICD). Is required for embryonic development and maintenance of adult stem cells in many different tissues and immune systeme; the DLL1-induced Notch signaling is mediated through an intercellular communication that regulates cell lineage, cell specification, cell patterning and morphogenesis through effects on differentiation and proliferation. Plays a role in brain development at different level, namely by regulating neuronal differentiation of neural precursor cells via cell-cell interaction, most likely through the lateral inhibitory system in an endogenous level dependent-manner. During neocortex development, Dll1-Notch signaling transmission is mediated by dynamic interactions between intermediate neurogenic progenitors and radial glia; the cell-cell interactions are mediated via dynamic and transient elongation processes, likely to reactivate/maintain Notch activity in neighboring progenitors, and coordinate progenitor cell division and differentiation across radial and zonal boundaries. During cerebellar development, regulates Bergmann glial monolayer formation and its morphological maturation through a Notch signaling pathway. At the retina and spinal cord level, regulates neurogenesis by preventing the premature differentiation of neural progenitors and also by maintaining progenitors in spinal cord through Notch signaling pathway. Also controls neurogenesis of the neural tube in a progenitor domain-specific fashion along the dorsoventral axis. Maintains quiescence of neural stem cells and plays a role as a fate determinant that segregates asymmetrically to one daughter cell during neural stem cells mitosis, resulting in neuronal differentiation in Dll1-inheriting cell. Plays a role in immune systeme development, namely the development of all T-cells and marginal zone (MZ) B-cells. Blocks the differentiation of progenitor cells into the B-cell lineage while promoting the emergence of a population of cells with the characteristics of a T-cell/NK-cell precursor. Also plays a role during muscle development. During early development, inhibits myoblasts differentiation from the medial dermomyotomal lip and later regulates progenitor cell differentiation. Directly modulates cell adhesion and basal lamina formation in satellite cells through Notch signaling. Maintains myogenic progenitors pool by suppressing differentiation through down-regulation of MYOD1 and is required for satellite cell homing and PAX7 expression. During craniofacial and trunk myogenesis suppresses differentiation of cranial mesoderm-derived and somite-derived muscle via MYOD1 regulation but in cranial mesoderm-derived progenitors, is neither required for satellite cell homing nor for PAX7 expression. Also plays a role during pancreatic cell development. During type B pancreatic cell development, may be involved in the initiation of proximodistal patterning in the early pancreatic epithelium. Stimulates multipotent pancreatic progenitor cells proliferation and pancreatic growth by maintaining HES1 expression and PTF1A protein levels. During fetal stages of development, is required to maintain arterial identity and the responsiveness of arterial endothelial cells for VEGFA through regulation of KDR activation and NRP1 expression. Controls sprouting angiogenesis and subsequent vertical branch formation through regulation on tip cell differentiation. Negatively regulates goblet cell differentiation in intestine and controls secretory fat commitment through lateral inhibition in small intestine. Plays a role during inner ear development; negatively regulates auditory hair cell differentiation. Plays a role during nephron development through Notch signaling pathway. Regulates growth, blood pressure and energy homeostasis. The protein is Delta-like protein 1 of Homo sapiens (Human).